A 170-amino-acid chain; its full sequence is Flavin reductase (NADPH) (170 aa).

This sequence belongs to the non-flavoprotein flavin reductase family.

The catalysed reaction is reduced riboflavin + NADP(+) = riboflavin + NADPH + 2 H(+). Functionally, catalyzes the NADH-dependent reduction of FAD to provide FADH2 for the halogenase RebH. This Lentzea aerocolonigenes (Lechevalieria aerocolonigenes) protein is Flavin reductase (NADPH) (rbmH).